The chain runs to 361 residues: RNA 3'-terminal phosphate cyclase (361 aa).

Residues Gln105, Pro132, Tyr295, Asp298, Gln299, and His321 each contribute to the ATP site. His321 acts as the Tele-AMP-histidine intermediate in catalysis.

Belongs to the RNA 3'-terminal cyclase family. Type 1 subfamily.

It localises to the nucleus. Its subcellular location is the nucleoplasm. The enzyme catalyses a 3'-end 3'-phospho-ribonucleotide-RNA + ATP = a 3'-end 2',3'-cyclophospho-ribonucleotide-RNA + AMP + diphosphate. In terms of biological role, catalyzes the conversion of 3'-phosphate to a 2',3'-cyclic phosphodiester at the end of RNA. The mechanism of action of the enzyme occurs in 3 steps: (A) adenylation of the enzyme by ATP; (B) transfer of adenylate to an RNA-N3'P to produce RNA-N3'PP5'A; (C) and attack of the adjacent 2'-hydroxyl on the 3'-phosphorus in the diester linkage to produce the cyclic end product. Likely functions in some aspects of cellular RNA processing. Function plays an important role in a RNA repair and splicing pathway which controls axon regeneration in response to peripheral (PNS) and central nervous system (CNS) injury. In response to axotomy, negatively regulates splicing of Xbp1 which in turn activates downstream effectors which inhibit axon regeneration, including down-regulating the microtubule regulators ringer and futsch. The sequence is that of RNA 3'-terminal phosphate cyclase from Drosophila melanogaster (Fruit fly).